The following is a 445-amino-acid chain: Enolase (445 aa).

Substrate contacts are provided by His-165 and Glu-174. The active-site Proton donor is Glu-217. Mg(2+) is bound by residues Asp-252, Glu-303, and Asp-330. Residues Glu-303 and Asp-330 each coordinate substrate. The active-site Proton acceptor is the Lys-355. Substrate-binding positions include 382 to 385 (SHRS) and Lys-406.

It belongs to the enolase family. As to quaternary structure, homodimer. Mg(2+) is required as a cofactor.

It localises to the cytoplasm. The catalysed reaction is (2R)-2-phosphoglycerate = phosphoenolpyruvate + H2O. Its pathway is carbohydrate degradation; glycolysis; pyruvate from D-glyceraldehyde 3-phosphate: step 4/5. In Eimeria tenella (Coccidian parasite), this protein is Enolase (ENO).